A 416-amino-acid chain; its full sequence is Serine hydroxymethyltransferase (416 aa).

Residues Leu121 and Gly125–Leu127 contribute to the (6S)-5,6,7,8-tetrahydrofolate site. The residue at position 230 (Lys230) is an N6-(pyridoxal phosphate)lysine. Ser354 to Phe356 contacts (6S)-5,6,7,8-tetrahydrofolate.

It belongs to the SHMT family. As to quaternary structure, homodimer. It depends on pyridoxal 5'-phosphate as a cofactor.

The protein localises to the cytoplasm. The enzyme catalyses (6R)-5,10-methylene-5,6,7,8-tetrahydrofolate + glycine + H2O = (6S)-5,6,7,8-tetrahydrofolate + L-serine. The protein operates within one-carbon metabolism; tetrahydrofolate interconversion. Its pathway is amino-acid biosynthesis; glycine biosynthesis; glycine from L-serine: step 1/1. Its function is as follows. Catalyzes the reversible interconversion of serine and glycine with tetrahydrofolate (THF) serving as the one-carbon carrier. This reaction serves as the major source of one-carbon groups required for the biosynthesis of purines, thymidylate, methionine, and other important biomolecules. Also exhibits THF-independent aldolase activity toward beta-hydroxyamino acids, producing glycine and aldehydes, via a retro-aldol mechanism. The protein is Serine hydroxymethyltransferase of Prochlorococcus marinus (strain MIT 9211).